The primary structure comprises 1197 residues: Neural cell adhesion molecule L1.1 (1197 aa).

5 Ig-like C2-type domains span residues 1–58 (EFRQ…TAVS), 69–160 (PSLA…EPMS), 165–263 (PSNS…YTVT), 268–355 (PYWT…THVH), and 360–442 (PAQI…KSIS). The Extracellular portion of the chain corresponds to 1 to 1054 (EFRQRDPSPS…SPRNFATEGW (1054 aa)). The cysteines at positions 92 and 143 are disulfide-linked. N-linked (GlcNAc...) asparagine glycans are attached at residues Asn135, Asn149, Asn221, Asn298, Asn414, Asn421, Asn438, and Asn449. 3 cysteine pairs are disulfide-bonded: Cys199–Cys247, Cys289–Cys339, and Cys383–Cys432. Residues 451 to 541 (TKIVGPPQNL…DSDTASGYIT (91 aa)) enclose the Ig-like C2-type 6 domain. Cys472 and Cys525 are oxidised to a cystine. 5 consecutive Fibronectin type-III domains span residues 548–643 (PPQS…TPAA), 645–742 (PDTN…SGED), 747–852 (APSA…TPEG), 853–952 (APGP…LLDG), and 953–1048 (EPPS…SPRN). Over residues 630–640 (APTESSLSYST) the composition is skewed to polar residues. Residues 630-655 (APTESSLSYSTPAAKPDTNPENVMTL) form a disordered region. N-linked (GlcNAc...) asparagine glycosylation is present at Asn708. 4 N-linked (GlcNAc...) asparagine glycosylation sites follow: Asn959, Asn968, Asn1002, and Asn1027. Residues 1055-1075 (FIGLISALVLLLLVLLLLCYI) traverse the membrane as a helical segment. Topologically, residues 1076 to 1197 (KKSKGGKYSV…TSVTGILGPN (122 aa)) are cytoplasmic. Disordered regions lie at residues 1115 to 1135 (MEKC…SNDS) and 1154 to 1197 (IGQY…LGPN).

The protein belongs to the immunoglobulin superfamily. L1/neurofascin/NgCAM family. In terms of tissue distribution, expressed in postmitotic neurons in 16-36 hours embryos, including those in the brain, cranial ganglia and otic and olfactory placodes, and in all classes of spinal neurons.

It localises to the cell membrane. The protein resides in the cell projection. The protein localises to the growth cone. In terms of biological role, cell adhesion molecule with an important role in the development of the nervous system. Involved in neuron-neuron adhesion, neurite fasciculation, outgrowth of neurites, etc. Binds to axonin on neurons. The sequence is that of Neural cell adhesion molecule L1.1 (nadl1.1) from Danio rerio (Zebrafish).